Reading from the N-terminus, the 732-residue chain is MMISKKYTLWALNPLLLTMMAPAVAQQTDDETFVVSANRSNRTVAEMAQTTWVIENAELEQQIQGGKELKDALAQLIPGLDVSSRSRTNYGMNVRGRPLVVLVDGVRLNSSRTDSRQLDSIDPFNMHHIEVIFGATSLYGGGSTGGLINIVTKKGQPETMMEFEAGTKSGFSSSKDHDERIAGAVSGGNEHISGRLSVAYQKFGGWFDGNGDATLLDNTQTGLQYSDRLDIMGTGTLNIDESRQLQLITQYYKSQGDDDYGLNLGKGFSAIRGTSTPFVSNGLNSDRIPGTDGHLISLQYSDSAFLGQELVGQVYYRDESLRFYPFPTVNANKQVTAFSSSQQDTDQYGMKLTLNSKPMDGWQITWGLDADHERFTSNQMFFDLAQASASGGLNNKKIYTTGRYPSYDITNLAAFLQSGYDINNLFTLNGGVRYQYTENKIDDFIGYAQQRQIGAGKATSADAFWRLSRLRHFLFNAGLLMHITEPQQAWLNFSQGLELPDPGKYYGRGIYGAAVNGHLPLTKSVNVSDSKLEGVKVDSYELGWRFTGNNLRTQIAAYYSISDKSVVANKDLTISVVDDKRRIYGVEGAVDYLIPDTDWSTGVNFNVLKTESKVNGTWQKYDVKTASPSKATAYIGWAPDPWSLRVQSTTSFDVSDAQGYKVDGYTTVDLLGSYQLPVGTLSFSIENLFDRDYTTVWGQRAPLYYSPGYGPASLYDYKGRGRTFGLNYSVLF.

An N-terminal signal peptide occupies residues 1-25 (MMISKKYTLWALNPLLLTMMAPAVA). A TonB box motif is present at residues 31 to 38 (ETFVVSAN). In terms of domain architecture, TBDR plug spans 43–153 (TVAEMAQTTW…TGGLINIVTK (111 aa)). The region spanning 158–732 (ETMMEFEAGT…TFGLNYSVLF (575 aa)) is the TBDR beta-barrel domain. Residues 715–732 (YDYKGRGRTFGLNYSVLF) carry the TonB C-terminal box motif.

It belongs to the TonB-dependent receptor family.

The protein localises to the cell outer membrane. Functionally, receptor for cloacin DF13/aerobactin. The protein is Ferric aerobactin receptor (iutA) of Escherichia coli.